Reading from the N-terminus, the 314-residue chain is Taste receptor type 2 member 42 (314 aa).

Residues 1-7 (MATELDK) are Extracellular-facing. A helical membrane pass occupies residues 8-28 (IFLILEIAEFIIGMLGNVFIG). Residues 29–50 (LVNCSEGIKNQKVFSADFILTC) lie on the Cytoplasmic side of the membrane. Residues 51 to 71 (LAISTIGQLFVILFDSFLVGL) traverse the membrane as a helical segment. Over 72-101 (ASHLYTTYRLGKPVIMLWHMTNHLTTWLAT) the chain is Extracellular. Residues 102–122 (CLSIFYFFKIAHFPHSLFLWL) form a helical membrane-spanning segment. The Cytoplasmic portion of the chain corresponds to 123–127 (RWRMN). Residues 128 to 148 (GMIVMLLILSLFLLIFDSLVL) traverse the membrane as a helical segment. Over 149–187 (EIFIDISLNIIDKSNLTLYLDESKTLYDKLSILKTLLSL) the chain is Extracellular. N-linked (GlcNAc...) asparagine glycosylation occurs at asparagine 163. The helical transmembrane segment at 188–208 (TSFIPFSLSLTSLLFFFLSLV) threads the bilayer. The Cytoplasmic segment spans residues 209–238 (RHTRNLKLSSLGSRDSSTEAHRRAMKMVMS). A helical membrane pass occupies residues 239-259 (FLFLFIVHFFSLQVANWIFFM). The Extracellular portion of the chain corresponds to 260–265 (LWNNKY). The helical transmembrane segment at 266-286 (IKFAMLALNAFPSCHSFILIL) threads the bilayer. Topologically, residues 287-314 (GNSKLRQTAVRLLWHLRNYTKTPNALPL) are cytoplasmic.

It belongs to the G-protein coupled receptor T2R family.

The protein resides in the membrane. Functionally, receptor that may play a role in the perception of bitterness and is gustducin-linked. May play a role in sensing the chemical composition of the gastrointestinal content. The activity of this receptor may stimulate alpha gustducin, mediate PLC-beta-2 activation and lead to the gating of TRPM5. The chain is Taste receptor type 2 member 42 (TAS2R42) from Pan paniscus (Pygmy chimpanzee).